Consider the following 241-residue polypeptide: uncharacterized protein (241 aa).

This is an uncharacterized protein from Ictaluridae (bullhead catfishes).